Reading from the N-terminus, the 337-residue chain is Eukaryotic translation initiation factor 3 subunit I (337 aa).

WD repeat units follow at residues G8 to T47, G50 to D91, C147 to N186, E191 to T230, and G288 to M327.

Belongs to the eIF-3 subunit I family. As to quaternary structure, component of the eukaryotic translation initiation factor 3 (eIF-3) complex.

The protein localises to the cytoplasm. Functionally, component of the eukaryotic translation initiation factor 3 (eIF-3) complex, which is involved in protein synthesis of a specialized repertoire of mRNAs and, together with other initiation factors, stimulates binding of mRNA and methionyl-tRNAi to the 40S ribosome. The eIF-3 complex specifically targets and initiates translation of a subset of mRNAs involved in cell proliferation. This chain is Eukaryotic translation initiation factor 3 subunit I (tif34), found in Aspergillus niger (strain ATCC MYA-4892 / CBS 513.88 / FGSC A1513).